Reading from the N-terminus, the 362-residue chain is Phosphoserine aminotransferase (362 aa).

Residues Ser-9 and Arg-42 each coordinate L-glutamate. Pyridoxal 5'-phosphate-binding positions include 76–77, Trp-102, Thr-153, Asp-174, and Gln-197; that span reads GR. Lys-198 carries the N6-(pyridoxal phosphate)lysine modification. 239-240 is a pyridoxal 5'-phosphate binding site; that stretch reads NT.

This sequence belongs to the class-V pyridoxal-phosphate-dependent aminotransferase family. SerC subfamily. In terms of assembly, homodimer. Pyridoxal 5'-phosphate serves as cofactor.

The protein resides in the cytoplasm. It catalyses the reaction O-phospho-L-serine + 2-oxoglutarate = 3-phosphooxypyruvate + L-glutamate. The catalysed reaction is 4-(phosphooxy)-L-threonine + 2-oxoglutarate = (R)-3-hydroxy-2-oxo-4-phosphooxybutanoate + L-glutamate. Its pathway is amino-acid biosynthesis; L-serine biosynthesis; L-serine from 3-phospho-D-glycerate: step 2/3. The protein operates within cofactor biosynthesis; pyridoxine 5'-phosphate biosynthesis; pyridoxine 5'-phosphate from D-erythrose 4-phosphate: step 3/5. In terms of biological role, catalyzes the reversible conversion of 3-phosphohydroxypyruvate to phosphoserine and of 3-hydroxy-2-oxo-4-phosphonooxybutanoate to phosphohydroxythreonine. This is Phosphoserine aminotransferase from Salmonella agona (strain SL483).